A 215-amino-acid chain; its full sequence is E3 ubiquitin-protein ligase znrf1 (215 aa).

Disordered stretches follow at residues 1 to 39 (MGGKQSTAGRPRGAFPGVSTDDSAVPPSAHFGHYRPGGT) and 66 to 96 (YTPRGTDSDRAGGGSGSDPAHNGNGYQETGG). A lipid anchor (N-myristoyl glycine) is attached at G2. The RING-type; atypical zinc finger occupies 172 to 213 (CVICLEELQQGDTIARLPCLCIYHKSCIDSWFEINRSCPEHP).

It localises to the endosome. It is found in the lysosome. The protein localises to the membrane. It carries out the reaction S-ubiquitinyl-[E2 ubiquitin-conjugating enzyme]-L-cysteine + [acceptor protein]-L-lysine = [E2 ubiquitin-conjugating enzyme]-L-cysteine + N(6)-ubiquitinyl-[acceptor protein]-L-lysine.. The protein operates within protein modification; protein ubiquitination. E3 ubiquitin-protein ligase that plays a role in neuron cells differentiation. Plays a role in the establishment and maintenance of neuronal transmission and plasticity. The sequence is that of E3 ubiquitin-protein ligase znrf1 (znrf1) from Danio rerio (Zebrafish).